The following is a 137-amino-acid chain: Cell division protein SepF (137 aa).

It belongs to the SepF family. As to quaternary structure, homodimer. Interacts with FtsZ.

The protein localises to the cytoplasm. In terms of biological role, cell division protein that is part of the divisome complex and is recruited early to the Z-ring. Probably stimulates Z-ring formation, perhaps through the cross-linking of FtsZ protofilaments. Its function overlaps with FtsA. This chain is Cell division protein SepF, found in Thermoanaerobacter pseudethanolicus (strain ATCC 33223 / 39E) (Clostridium thermohydrosulfuricum).